The following is a 132-amino-acid chain: Small ribosomal subunit protein uS11 (132 aa).

It belongs to the universal ribosomal protein uS11 family. Part of the 30S ribosomal subunit. Interacts with proteins S7 and S18. Binds to IF-3.

In terms of biological role, located on the platform of the 30S subunit, it bridges several disparate RNA helices of the 16S rRNA. Forms part of the Shine-Dalgarno cleft in the 70S ribosome. The polypeptide is Small ribosomal subunit protein uS11 (Chlamydia caviae (strain ATCC VR-813 / DSM 19441 / 03DC25 / GPIC) (Chlamydophila caviae)).